The chain runs to 245 residues: Probable ABC transporter permease protein HI_0355 (245 aa).

Transmembrane regions (helical) follow at residues 9–29 (LLIVGVLLMIWQMVATLGSFP), 61–81 (ICLGLLLGFLFGLISALLLSF), 92–112 (ILVISQAIPVFAIAPLLVLWF), 115–135 (GMASKIVMSVLIIYFPVTAAC), 170–190 (LPAFASGLRIAVSVAPIGAVV), and 217–237 (FAALLILVSISLCLYFSIDWL). The ABC transmembrane type-1 domain occupies 50–234 (LWQHTQVTLL…SISLCLYFSI (185 aa)).

It belongs to the binding-protein-dependent transport system permease family. CysTW subfamily.

The protein localises to the cell inner membrane. Its function is as follows. Probably part of a binding-protein-dependent transport system. Probably responsible for the translocation of the substrate across the membrane. This Haemophilus influenzae (strain ATCC 51907 / DSM 11121 / KW20 / Rd) protein is Probable ABC transporter permease protein HI_0355.